We begin with the raw amino-acid sequence, 494 residues long: Cobyrinate a,c-diamide synthase (494 aa).

Residues 270–475 (KIGVALDEAF…AHLHGVAYRE (206 aa)) enclose the GATase cobBQ-type domain. The active-site Nucleophile is the Cys-352.

It belongs to the CobB/CbiA family. It depends on Mg(2+) as a cofactor.

The enzyme catalyses cob(II)yrinate + 2 L-glutamine + 2 ATP + 2 H2O = cob(II)yrinate a,c diamide + 2 L-glutamate + 2 ADP + 2 phosphate + 2 H(+). It catalyses the reaction Ni-sirohydrochlorin + 2 L-glutamine + 2 ATP + 2 H2O = Ni-sirohydrochlorin a,c-diamide + 2 L-glutamate + 2 ADP + 2 phosphate + 2 H(+). It functions in the pathway cofactor biosynthesis; adenosylcobalamin biosynthesis; cob(II)yrinate a,c-diamide from sirohydrochlorin (anaerobic route): step 10/10. In terms of biological role, catalyzes the ATP-dependent amidation of the two carboxylate groups at positions a and c of cobyrinate, using either L-glutamine or ammonia as the nitrogen source (Potential). Involved in the biosynthesis of the unique nickel-containing tetrapyrrole coenzyme F430, the prosthetic group of methyl-coenzyme M reductase (MCR), which plays a key role in methanogenesis and anaerobic methane oxidation. Catalyzes the ATP-dependent amidation of the two carboxylate groups at positions a and c of Ni-sirohydrochlorin, using L-glutamine or ammonia as the nitrogen source. Also able to use sirohydrochlorin as substrate, but only produces a monoamide species in a much slower reaction. Unable to use other metallosirohydrochlorins such as sirohaem and Co-sirohydrochlorin. The polypeptide is Cobyrinate a,c-diamide synthase (Methanosarcina barkeri (strain Fusaro / DSM 804)).